A 116-amino-acid polypeptide reads, in one-letter code: Large ribosomal subunit protein uL18 (116 aa).

It belongs to the universal ribosomal protein uL18 family. In terms of assembly, part of the 50S ribosomal subunit; part of the 5S rRNA/L5/L18/L25 subcomplex. Contacts the 5S and 23S rRNAs.

This is one of the proteins that bind and probably mediate the attachment of the 5S RNA into the large ribosomal subunit, where it forms part of the central protuberance. In Chromohalobacter salexigens (strain ATCC BAA-138 / DSM 3043 / CIP 106854 / NCIMB 13768 / 1H11), this protein is Large ribosomal subunit protein uL18.